The following is a 265-amino-acid chain: Hemin import ATP-binding protein HmuV (265 aa).

In terms of domain architecture, ABC transporter spans 13–249 (LKASNLHLQL…TAVENVYGWP (237 aa)). 45–52 (GPNGAGKS) lines the ATP pocket.

The protein belongs to the ABC transporter superfamily. Heme (hemin) importer (TC 3.A.1.14.5) family. As to quaternary structure, the complex is composed of two ATP-binding proteins (HmuV), two transmembrane proteins (HmuU) and a solute-binding protein (HmuT).

The protein resides in the cell inner membrane. Its function is as follows. Part of the ABC transporter complex HmuTUV involved in hemin import. Responsible for energy coupling to the transport system. The sequence is that of Hemin import ATP-binding protein HmuV from Photobacterium damsela subsp. piscicida (Pasteurella piscicida).